A 494-amino-acid polypeptide reads, in one-letter code: Calmodulin-binding protein 60 A (494 aa).

Residues 1-62 (MRIPTYDFGS…AGIKWICEKE (62 aa)) form a calmodulin-binding region. A DNA-binding region spans residues 132 to 252 (VSDWTDEDIR…AFHRRLNLSN (121 aa)).

It belongs to the plant ACBP60 protein family. As to quaternary structure, interacts with calmodulin (CaM). Expressed in stems, flowers and root.

Its subcellular location is the nucleus. Its function is as follows. Transcription activator that binds DNA in a sequence-specific manner, likely 5'-GAAATTTTGG-3', to promote the expression of target genes. This chain is Calmodulin-binding protein 60 A, found in Arabidopsis thaliana (Mouse-ear cress).